A 501-amino-acid chain; its full sequence is Glycerol kinase (501 aa).

Threonine 17 lines the ADP pocket. Residues threonine 17, threonine 18, and serine 19 each contribute to the ATP site. Threonine 17 contacts sn-glycerol 3-phosphate. Arginine 21 lines the ADP pocket. 4 residues coordinate sn-glycerol 3-phosphate: arginine 87, glutamate 88, tyrosine 139, and aspartate 243. Residues arginine 87, glutamate 88, tyrosine 139, aspartate 243, and glutamine 244 each coordinate glycerol. ADP is bound by residues threonine 265 and glycine 308. 4 residues coordinate ATP: threonine 265, glycine 308, glutamine 312, and glycine 409. 2 residues coordinate ADP: glycine 409 and asparagine 413.

This sequence belongs to the FGGY kinase family.

The catalysed reaction is glycerol + ATP = sn-glycerol 3-phosphate + ADP + H(+). It participates in polyol metabolism; glycerol degradation via glycerol kinase pathway; sn-glycerol 3-phosphate from glycerol: step 1/1. With respect to regulation, inhibited by fructose 1,6-bisphosphate (FBP). Functionally, key enzyme in the regulation of glycerol uptake and metabolism. Catalyzes the phosphorylation of glycerol to yield sn-glycerol 3-phosphate. The sequence is that of Glycerol kinase from Pseudomonas savastanoi pv. phaseolicola (strain 1448A / Race 6) (Pseudomonas syringae pv. phaseolicola (strain 1448A / Race 6)).